A 364-amino-acid chain; its full sequence is Large ribosomal subunit protein uL22m (364 aa).

Belongs to the universal ribosomal protein uL22 family. Component of the mitochondrial large ribosomal subunit (mt-LSU). Mature N.crassa 74S mitochondrial ribosomes consist of a small (37S) and a large (54S) subunit. The 37S small subunit contains a 16S ribosomal RNA (16S mt-rRNA) and 32 different proteins. The 54S large subunit contains a 23S rRNA (23S mt-rRNA) and 42 different proteins. uL22m forms the wall of the exit tunnel.

Its subcellular location is the mitochondrion. Component of the mitochondrial ribosome (mitoribosome), a dedicated translation machinery responsible for the synthesis of mitochondrial genome-encoded proteins, including at least some of the essential transmembrane subunits of the mitochondrial respiratory chain. The mitoribosomes are attached to the mitochondrial inner membrane and translation products are cotranslationally integrated into the membrane. The polypeptide is Large ribosomal subunit protein uL22m (mrpl22) (Neurospora crassa (strain ATCC 24698 / 74-OR23-1A / CBS 708.71 / DSM 1257 / FGSC 987)).